The primary structure comprises 259 residues: Putative aldolase class 2 protein PA3430 (259 aa).

Positions 113, 115, and 176 each coordinate Zn(2+).

Belongs to the aldolase class II family. Requires Zn(2+) as cofactor.

The sequence is that of Putative aldolase class 2 protein PA3430 from Pseudomonas aeruginosa (strain ATCC 15692 / DSM 22644 / CIP 104116 / JCM 14847 / LMG 12228 / 1C / PRS 101 / PAO1).